The chain runs to 26 residues: uncharacterized protein (26 aa).

Residues 1–16 show a composition bias toward polar residues; sequence MPEQKANCSPNGNITV. Residues 1–26 are disordered; it reads MPEQKANCSPNGNITVDSMIMSLGSS.

This is an uncharacterized protein from Saccharomyces cerevisiae (strain ATCC 204508 / S288c) (Baker's yeast).